A 314-amino-acid polypeptide reads, in one-letter code: Transcriptional activator RhrA (314 aa).

One can recognise an HTH araC/xylS-type domain in the interval 210–310 (ASIKMRVEQN…GVRPSDLRRL (101 aa)). DNA-binding regions (H-T-H motif) lie at residues 228-249 (TDVAEAERITPRAIQKFFSREG) and 277-300 (ISQIAYNVGFNDLSYFNRTFRSRY).

Functionally, transcriptional activator of the rhizobactin regulon. The protein is Transcriptional activator RhrA (rhrA) of Rhizobium meliloti (strain 1021) (Ensifer meliloti).